The primary structure comprises 1300 residues: MGTASSLVNAGEVIEDTYGGGGGEDCVIPVEVKPKARLLRSSFRRGPRVIGASFKSTASVDLEYAAEYERLKKEYEIFRVSKNNEVASMQKKEIKLDEENKRLRAELQALQKTYQKILREKESAVEAKYQAMERAATFEHDRDKVKRQFKIFRETKEKEIQDLLRAKRDLEAKLQRLQAQGIQVFDPGESDSDDNGTEVTVPSTQCEYWTSGALGSDPSMGSMMQLQQSFRGPEFAHSSIDVEGPFANVNRDDWDAAVASLLQVTPLFSQSLWSNTVRCYLMSTAETQAEVEIFLRDYSPKLQRMCETSGYFFQMVFFPEECESQHFAVRKWEIEKSSIVILFICSSLPSCLQEDCEEAFLKNNEAKPRLIYHSIEDGRSDSDGLKQLLEQDTNKANKTKVVDHCGDPVEGAYKLYCHLEQVIKQDLLGIEISDPDAKDESATMEDDDYGDVLWDVHDEQEQMEAYQQASQSICELGFQKYYDRLNDLVAAPAPIPPLLISGGPGSGKSLLLSKWIQLQQKHSPNTLMLYHFVGRPLSSSSEPSLIIKRLTLKLMQHSWSVSSLSMDPGKFLEEFPHWLEKLSIRYQGNIIIIIDSIDHIQQSEKHMKWLIDPLPVNVRVIVSVNVETCPQAWRLWPTLHLDPLNSKDVKALINMECGGANILLTKEQERKLERHCRSATTCNALYVTLITKLLTWAGSTGKIEDVLQQCLQCQDTVSLYRLVLRSVQEVMPSAKEKEFMREILCFISVSHNGVSECELMELCPGLTWEVLTSLIYHLYTLVLLKYTCGLLQFQHLQAWDAVNLEYMQGGQNIISEYREKIIKHFTTQLSHDRVTWRSADELTWLFQQQGEKQKLHKCLMNLFVSQNLYKRGHFAELLSYWQLVGKDKISMASEYFDALKQYEKNCEGEEKMTSLADLYETLGRFLKDLGLLSQAVTPLQRSLEIRETALDPDHPSVAQSLHQLAGVYMQSKKFGNAEQLYKQALEISENAYGSEHLRVARELDALAVLYQKQNKFEQAEQLRKKSLKIRQKSARRKGSMYGFALLRRRALQLEELTLGKDTSDNARTLNELGVLYYLQNNLETAETFLKRSLEMRERVLGADHPDCAQSINNLAALYNEKKQYDKAEELYERALDIRRRALSPDHPSLAYTVKHLAVLYKRKGKLDKAVPLYELAVDIRQKSFGPKHPSVATALVNLAVLYCQMKKQDDALPLYERAMKIYEDSLGRMHPRVGETLKNLAVLRYEEGDYEKAAELYKRAMEIKETETSVLGAKAPSGHSSSGGDTYSVQNTLPVSVFPE.

Residues 82 to 183 (KNNEVASMQK…LQRLQAQGIQ (102 aa)) adopt a coiled-coil conformation. TPR repeat units follow at residues 443-476 (TMED…ICEL), 916-949 (ADLY…RETA), 958-991 (AQSL…SENA), 1000-1033 (AREL…RQKS), 1066-1099 (ARTL…RERV), 1108-1141 (AQSI…RRRA), 1150-1183 (AYTV…RQKS), 1192-1225 (ATAL…YEDS), and 1234-1267 (GETL…KETE). A disordered region spans residues 1268–1288 (TSVLGAKAPSGHSSSGGDTYS). Positions 1278 to 1288 (GHSSSGGDTYS) are enriched in polar residues.

It localises to the cell projection. The protein resides in the cilium. In terms of biological role, required for normal ciliary development and function. Inhibits disheveled-1-induced canonical Wnt-signaling activity and may also play a role in the control of non-canonical Wnt signaling that regulates planar cell polarity. Probably acts as a molecular switch between different Wnt signaling pathways. Required for proper convergent extension cell movements. This chain is Nephrocystin-3 (nphp3), found in Xenopus laevis (African clawed frog).